A 298-amino-acid polypeptide reads, in one-letter code: Leucine-rich repeat-containing protein 38 (298 aa).

A signal peptide spans 1–31 (MSLCVAPRHPTGAAAALGLGSLLVLLGPGRA). 2 disulfides stabilise this stretch: Cys32-Cys38 and Cys36-Cys46. The region spanning 32-60 (CPAGCACTDPHTVDCRDRGLPSVPDPFPL) is the LRRNT domain. Residues 32–251 (CPAGCACTDP…ECKFSLSLTD (220 aa)) are Extracellular-facing. LRR repeat units follow at residues 61-82 (DVRK…FFIF), 85-106 (DLVY…TFSG), 109-130 (KLAF…AFRS), 133-154 (RLVK…AFES), and 157-177 (SLQV…AALD). Asn119 is a glycosylation site (N-linked (GlcNAc...) asparagine). Residues 190-245 (NPWLCDCDFAHLFSWIQENTSKLPKGLDAIQCSLPMEDRRVALRELSEASFSECKF) form the LRRCT domain. Intrachain disulfides connect Cys194–Cys221 and Cys196–Cys243. Residues 252 to 272 (LFIIIFSGVAVSIAAIISSFF) form a helical membrane-spanning segment. Residues 273–298 (LATVVQCFQRCAPNKDTEDEDDDEDD) are Cytoplasmic-facing.

As to quaternary structure, interacts with KCNMA1.

Its subcellular location is the cell membrane. In terms of biological role, auxiliary protein of the large-conductance, voltage and calcium-activated potassium channel (BK alpha). Modulates gating properties by producing a marked shift in the BK channel's voltage dependence of activation in the hyperpolarizing direction, and in the absence of calcium. This Mus musculus (Mouse) protein is Leucine-rich repeat-containing protein 38 (Lrrc38).